We begin with the raw amino-acid sequence, 475 residues long: Gustatory and pheromone receptor 33a (475 aa).

Residues 1 to 34 (MIQIMNWFSMVIGLIPLNRQQSETNFILDYAMMC) lie on the Cytoplasmic side of the membrane. A helical membrane pass occupies residues 35–55 (IVPIFYVACYLLINLSHIIGL). Residues 56–68 (CLLDSCNSVCKLS) are Extracellular-facing. The chain crosses the membrane as a helical span at residues 69–89 (SHLFMHLGAFLYLTITLLSLY). The Cytoplasmic segment spans residues 90–128 (RRKEFFQQFDARLNDIDAVIQKCQRVAEMDKVKVTAVKH). The chain crosses the membrane as a helical span at residues 129 to 149 (SVAYHFTWLFLFCVFTFALYY). At 150–158 (DVRSLYLTF) the chain is on the extracellular side. The chain crosses the membrane as a helical span at residues 159–179 (GNLAFIPFMVSSFPYLAGSII). Topologically, residues 180-319 (QGEFIYHVSV…LALSVITNGE (140 aa)) are cytoplasmic. Positions 243–281 (TGFGNENKFAGEMKRQEGQQKNDDDDLDTSNDEDEDDFD) are disordered. Residues 251–264 (FAGEMKRQEGQQKN) show a composition bias toward basic and acidic residues. Residues 265–281 (DDDDLDTSNDEDEDDFD) show a composition bias toward acidic residues. Residues 320-340 (FGPQCVPYMAACFVVSIFGIF) form a helical membrane-spanning segment. Residues 341-357 (LETKVNFIVGGKSRLLD) lie on the Extracellular side of the membrane. The helical transmembrane segment at 358-378 (YMTYLYVIWSFTTMMVAYIVL) threads the bilayer. The Cytoplasmic portion of the chain corresponds to 379–441 (RLCCNANNHS…FNGVGLFALD (63 aa)). The helical transmembrane segment at 442 to 462 (YTFIFSTVSAATSYLIVLLQF) threads the bilayer. At 463 to 475 (DMTAILRNEGLMS) the chain is on the extracellular side.

The protein belongs to the insect chemoreceptor superfamily. Gustatory receptor (GR) family. Gr66a subfamily. In terms of tissue distribution, expressed widely in gustatory receptor neurons (GRNs) that respond to aversive chemicals. In larvae, is expressed in neurons of the terminal external chemosensory organ, and the dorsal, ventral and posterior external chemosensory organs.

Its subcellular location is the cell membrane. In terms of biological role, gustatory receptor which mediates acceptance or avoidance behavior, depending on its substrates. Required for sensing all nonvolatile repulsive chemicals, including tastants, pheromones, and especially N,N-Diethyl-meta-toluamide (DEET), the most widely used insect repellent worldwide. Also functions as a pheromone receptor for a male inhibitory pheromone leading to male-male courtship suppression. This chain is Gustatory and pheromone receptor 33a (Gr33a), found in Drosophila melanogaster (Fruit fly).